The chain runs to 198 residues: Probable GTP-binding protein EngB (198 aa).

Positions asparagine 21–glycine 195 constitute an EngB-type G domain. GTP contacts are provided by residues glycine 29–serine 36, glycine 56–leucine 60, aspartate 81–glycine 84, threonine 151–aspartate 154, and valine 174–asparagine 176. Residues serine 36 and threonine 58 each coordinate Mg(2+).

The protein belongs to the TRAFAC class TrmE-Era-EngA-EngB-Septin-like GTPase superfamily. EngB GTPase family. The cofactor is Mg(2+).

Functionally, necessary for normal cell division and for the maintenance of normal septation. The protein is Probable GTP-binding protein EngB of Campylobacter jejuni subsp. jejuni serotype O:6 (strain 81116 / NCTC 11828).